The chain runs to 483 residues: Probable L-xylulose kinase (483 aa).

Belongs to the FGGY kinase family. In terms of assembly, homodimer.

It carries out the reaction L-xylulose + ATP = L-xylulose 5-phosphate + ADP + H(+). The sequence is that of Probable L-xylulose kinase (lyx) from Pasteurella multocida (strain Pm70).